The following is a 374-amino-acid chain: Tetraacyldisaccharide 4'-kinase (374 aa).

66 to 73 (TAGGTGKT) serves as a coordination point for ATP.

It belongs to the LpxK family.

The catalysed reaction is a lipid A disaccharide + ATP = a lipid IVA + ADP + H(+). It functions in the pathway glycolipid biosynthesis; lipid IV(A) biosynthesis; lipid IV(A) from (3R)-3-hydroxytetradecanoyl-[acyl-carrier-protein] and UDP-N-acetyl-alpha-D-glucosamine: step 6/6. In terms of biological role, transfers the gamma-phosphate of ATP to the 4'-position of a tetraacyldisaccharide 1-phosphate intermediate (termed DS-1-P) to form tetraacyldisaccharide 1,4'-bis-phosphate (lipid IVA). The polypeptide is Tetraacyldisaccharide 4'-kinase (Syntrophus aciditrophicus (strain SB)).